An 826-amino-acid chain; its full sequence is Protein lozenge (826 aa).

Disordered stretches follow at residues 1–45, 87–171, and 214–263; these read MHLH…ASQT, PVSV…WSSS, and ASVG…NNNN. Residues 12–24 are compositionally biased toward pro residues; the sequence is PPSPSPNPTPTPS. Positions 106 to 141 are enriched in basic residues; it reads SHHHHHLHHHYSPYHHAHPYHPPHPHAPHHHHHHHP. Residues 142–153 are compositionally biased toward pro residues; it reads PYPYPPAGPHPP. Residues 156 to 171 show a composition bias toward polar residues; that stretch reads VTSSSTSPTGNGWSSS. A Runt domain is found at 275–403; that stretch reads LVQKRQQEHP…TVDGPREPRS (129 aa). A compositionally biased stretch (low complexity) spans 774–798; it reads QQQQQQQQQQQQVHHPQQQQVESAG. The tract at residues 774 to 826 is disordered; it reads QQQQQQQQQQQQVHHPQQQQVESAGEVGGSGAGGVESAREEDVGDLSQVWRPY.

As to expression, expressed in the pupal eye during programmed cell death.

The protein localises to the nucleus. Functionally, involved in prepatterning photoreceptor precursors in the developing eye; in the larval eye disk it defines a subset of cells as an equipotential group that is competent to respond to the sevenless developmental signal and another subset that confer proper photoreceptor identity by positively regulating the homeo box gene Bar. Involved in the aop/pnt dynamic in a Ras-dependent manner to regulate pros expression. Promotes apoptosis in the pupal eye by directly activating aos and klu. Also modulates hid- and rpr-mediated cell death. Regulates amos function in olfactory sensilla development. This is Protein lozenge (lz) from Drosophila melanogaster (Fruit fly).